Consider the following 102-residue polypeptide: Omega-hexatoxin-Hi2a (102 aa).

A signal peptide spans 1–23 (MKFSKLSLTLALILTQALLVVCG). Residues 24-56 (KINEDFMENGLESHALHDEIRKPIDTEKADAER) constitute a propeptide that is removed on maturation. 3 cysteine pairs are disulfide-bonded: Cys-61/Cys-75, Cys-68/Cys-81, and Cys-74/Cys-86. Leucine amide is present on Leu-98. A propeptide spanning residues 100-102 (RAL) is cleaved from the precursor.

It belongs to the neurotoxin 15 family. 02 (omega-actx) subfamily. In terms of tissue distribution, expressed by the venom gland.

Its subcellular location is the secreted. Functionally, potent inhibitor of insect, but not mammalian, voltage-gated calcium channels (Cav). The protein is Omega-hexatoxin-Hi2a of Hadronyche infensa (Fraser island funnel-web spider).